The primary structure comprises 230 residues: Sugar fermentation stimulation protein homolog (230 aa).

It belongs to the SfsA family.

The sequence is that of Sugar fermentation stimulation protein homolog from Clostridium botulinum (strain Okra / Type B1).